Here is a 590-residue protein sequence, read N- to C-terminus: Putative ABC transporter ATP-binding protein MM_3016 (590 aa).

ABC transporter domains lie at Val-11–Ile-251 and Val-317–Ile-550. ATP contacts are provided by residues Gly-45–Ser-52 and Gly-350–Thr-357.

It belongs to the ABC transporter superfamily.

It localises to the cell membrane. Probably part of an ABC transporter complex. Responsible for energy coupling to the transport system. This is Putative ABC transporter ATP-binding protein MM_3016 from Methanosarcina mazei (strain ATCC BAA-159 / DSM 3647 / Goe1 / Go1 / JCM 11833 / OCM 88) (Methanosarcina frisia).